The chain runs to 1349 residues: Protein strawberry notch homolog 2 (1349 aa).

Disordered stretches follow at residues 170 to 212, 609 to 633, and 1319 to 1349; these read YQSH…QHPD, STRR…PKAS, and PTET…FPNS. Over residues 177-188 the composition is skewed to acidic residues; that stretch reads EEEEGEEEEETE. The span at 609-631 shows a compositional bias: basic residues; the sequence is STRRRRDRGGGKRKRRPRGRGPK.

It belongs to the SBNO family. As to quaternary structure, interacts with TAL1; this interaction inhibits TAL1 occupancy of the DCSTAMP promoter, leading to the activation of the DCSTAMP promoter by the transcription factor MITF. In terms of tissue distribution, expressed in the spleen and bone marrow, and to a lesser extent in the kidney, liver, brain, skin, heart and muscle. Expressed predominantly in osteoclasts, and to a lesser extent in T-cells, B-cells and osteoblasts. Expressed in macrophages.

Acts as a transcriptional coregulator, that can have both coactivator and corepressor functions. Inhibits the DCSTAMP-repressive activity of TAL1, hence enhancing the access of the transcription factor MITF to the DC-STAMP promoter in osteoclast. Plays a role in bone homeostasis; required as a positive regulator in TNFSF11//RANKL-mediated osteoclast fusion via a DCSTAMP-dependent pathway. May also be required in the regulation of osteoblast differentiation. Involved in the transcriptional corepression of NF-kappaB in macrophages. Plays a role as a regulator in the pro-inflammatory cascade. The polypeptide is Protein strawberry notch homolog 2 (Sbno2) (Mus musculus (Mouse)).